The chain runs to 335 residues: Glycerol-3-phosphate dehydrogenase [NAD(P)+] (335 aa).

Phenylalanine 11, arginine 31, and lysine 107 together coordinate NADPH. Lysine 107 and glycine 135 together coordinate sn-glycerol 3-phosphate. Alanine 139 lines the NADPH pocket. Residues lysine 190, aspartate 245, serine 255, arginine 256, and asparagine 257 each coordinate sn-glycerol 3-phosphate. Residue lysine 190 is the Proton acceptor of the active site. Arginine 256 provides a ligand contact to NADPH. NADPH-binding residues include leucine 280 and glutamate 282.

This sequence belongs to the NAD-dependent glycerol-3-phosphate dehydrogenase family.

The protein resides in the cytoplasm. It carries out the reaction sn-glycerol 3-phosphate + NAD(+) = dihydroxyacetone phosphate + NADH + H(+). The catalysed reaction is sn-glycerol 3-phosphate + NADP(+) = dihydroxyacetone phosphate + NADPH + H(+). The protein operates within membrane lipid metabolism; glycerophospholipid metabolism. Catalyzes the reduction of the glycolytic intermediate dihydroxyacetone phosphate (DHAP) to sn-glycerol 3-phosphate (G3P), the key precursor for phospholipid synthesis. In Anaplasma marginale (strain St. Maries), this protein is Glycerol-3-phosphate dehydrogenase [NAD(P)+].